Reading from the N-terminus, the 289-residue chain is Trihelix transcription factor GT-3b (289 aa).

Positions W42–V98 constitute a Myb-like domain. Residues K65–K81 carry the Bipartite nuclear localization signal motif. Residues E137–V200 form a disordered region. Residues S156–V168 show a composition bias toward acidic residues. The Nuclear localization signal signature appears at P179–K188. A compositionally biased stretch (low complexity) spans G190–G199. Residues E223–L275 are a coiled coil.

As to quaternary structure, heterodimer with GT-3A. Associated with the mediator complex.

It is found in the nucleus. In terms of biological role, probable transcription factor that may play a role in the induction of CAM4 in response to pathogen and salt. This chain is Trihelix transcription factor GT-3b (GT-3B), found in Arabidopsis thaliana (Mouse-ear cress).